We begin with the raw amino-acid sequence, 444 residues long: Glutamate--tRNA ligase 1 (444 aa).

The 'HIGH' region motif lies at Pro7–Asn17. Residues Lys238–Arg242 carry the 'KMSKS' region motif. Lys241 contacts ATP.

It belongs to the class-I aminoacyl-tRNA synthetase family. Glutamate--tRNA ligase type 1 subfamily. As to quaternary structure, monomer.

It is found in the cytoplasm. It carries out the reaction tRNA(Glu) + L-glutamate + ATP = L-glutamyl-tRNA(Glu) + AMP + diphosphate. Its function is as follows. Catalyzes the attachment of glutamate to tRNA(Glu) in a two-step reaction: glutamate is first activated by ATP to form Glu-AMP and then transferred to the acceptor end of tRNA(Glu). In Wolbachia pipientis subsp. Culex pipiens (strain wPip), this protein is Glutamate--tRNA ligase 1.